Consider the following 181-residue polypeptide: Large ribosomal subunit protein uL5 (181 aa).

This sequence belongs to the universal ribosomal protein uL5 family. Part of the 50S ribosomal subunit; part of the 5S rRNA/L5/L18/L25 subcomplex. Contacts the 5S rRNA and the P site tRNA. Forms a bridge to the 30S subunit in the 70S ribosome.

Functionally, this is one of the proteins that bind and probably mediate the attachment of the 5S RNA into the large ribosomal subunit, where it forms part of the central protuberance. In the 70S ribosome it contacts protein S13 of the 30S subunit (bridge B1b), connecting the 2 subunits; this bridge is implicated in subunit movement. Contacts the P site tRNA; the 5S rRNA and some of its associated proteins might help stabilize positioning of ribosome-bound tRNAs. The polypeptide is Large ribosomal subunit protein uL5 (Mesomycoplasma hyopneumoniae (strain 7448) (Mycoplasma hyopneumoniae)).